A 154-amino-acid polypeptide reads, in one-letter code: UPF0178 protein BAV3236 (154 aa).

The protein belongs to the UPF0178 family.

This is UPF0178 protein BAV3236 from Bordetella avium (strain 197N).